Reading from the N-terminus, the 189-residue chain is Large ribosomal subunit protein bL9 (189 aa).

The protein belongs to the bacterial ribosomal protein bL9 family.

In terms of biological role, binds to the 23S rRNA. The chain is Large ribosomal subunit protein bL9 from Cereibacter sphaeroides (strain ATCC 17023 / DSM 158 / JCM 6121 / CCUG 31486 / LMG 2827 / NBRC 12203 / NCIMB 8253 / ATH 2.4.1.) (Rhodobacter sphaeroides).